The primary structure comprises 60 residues: MAKGKENRIVITLECTEAKKEGKTVSRYSTTKNKKNTTDRLVLKKYNPNLQRHTLHKEIK.

This sequence belongs to the bacterial ribosomal protein bL33 family.

The sequence is that of Large ribosomal subunit protein bL33 from Chlorobium luteolum (strain DSM 273 / BCRC 81028 / 2530) (Pelodictyon luteolum).